A 241-amino-acid chain; its full sequence is Transcription initiation factor TFIID subunit 14 (241 aa).

Positions 1–137 (MTTVKRTVRL…PGLLKALTAT (137 aa)) constitute a YEATS domain. Residues 141–169 (PGYSDEGEEARKDKRKNESEVGAGKKKAK) form a disordered region. The span at 149–159 (EARKDKRKNES) shows a compositional bias: basic and acidic residues.

The protein belongs to the TAF14 family. Component of the fcp1/TFIIF/polII complex via interaction of tfg3 with both tfg1/TFIIF-alpha and tfg2/TFIIF-beta subunits. Component of the SWI/SNF global transcription activator complex composed of at least arp9, arp42, snf5, snf22, snf30, sbf59, sol1, ssr1, ssr2, ssr3, ssr4 and tfg3. Also interacts with the TATA-binding protein (TBP). Component of the mst2 complex composed of at least eaf6, mst2, nto1, pdp3, ptf1, ptf2 and tfg3.

It is found in the nucleus. The protein resides in the nucleoplasm. Functions as a component of the DNA-binding general transcription factor complex TFIID, and the RNA polymerase II associated general transcription factor complex TFIIF. Binding of TFIID to a promoter (with or without TATA element) is the initial step in preinitiation complex (PIC) formation. TFIID plays a key role in the regulation of gene expression by RNA polymerase II through different activities such as transcription activator interaction, core promoter recognition and selectivity, TFIIA and TFIIB interaction, facilitation of DNA opening and initiation of transcription. TFIIF is essential for the initiation of transcription by RNA polymerase II. TFIIF functions include the recruitment of RNA polymerase II to the promoter bound DNA-TBP-TFIIB complex, decreasing the affinity of RNA polymerase II for non-specific DNA, allowing for the subsequent recruitment of TFIIE and TFIIH, and facilitating RNA polymerase II elongation. The TAF14 subunit has stimulatory activity. Component of the SWI/SNF complex, an ATP-dependent chromatin remodeling complex, required for the positive and negative regulation of gene expression of a large number of genes. It changes chromatin structure by altering DNA-histone contacts within a nucleosome, leading eventually to a change in nucleosome position, thus facilitating or repressing binding of gene-specific transcription factors. Component of the mst2 complex which is a highly specific H3 lysine 14 (H3K14) acetyltransferase that functions together with gcn5 to regulate global levels of H3K14 acetylation (H3K14ac), critical for DNA damage checkpoint activation. The sequence is that of Transcription initiation factor TFIID subunit 14 (tfg3) from Schizosaccharomyces pombe (strain 972 / ATCC 24843) (Fission yeast).